The primary structure comprises 1154 residues: Voltage-dependent calcium channel subunit alpha-2/delta-2 (1154 aa).

The first 18 residues, 1–18 (MAVPARTCGASWPGPVRT), serve as a signal peptide directing secretion. The disordered stretch occupies residues 1 to 37 (MAVPARTCGASWPGPVRTARPWPGRGPRPCPDPRGPA). The Extracellular portion of the chain corresponds to 19–1116 (ARPWPGRGPR…TEDTSDCGRG (1098 aa)). Residues 24–34 (GRGPRPCPDPR) are compositionally biased toward pro residues. Asn205 carries N-linked (GlcNAc...) asparagine glycosylation. The region spanning 294 to 472 (DMVIIVDVSG…INTQEYLDVL (179 aa)) is the VWFA domain. Residues Asp300, Ser302, and Ser304 each coordinate a divalent metal cation. The short motif at 300–304 (DVSGS) is the MIDAS-like motif element. N-linked (GlcNAc...) asparagine glycans are attached at residues Asn389, Asn421, Asn510, Asn543, Asn627, and Asn864. Cysteines 446 and 1101 form a disulfide. The 90-residue stretch at 488 to 577 (WTNVYEDALG…KPQTTNFREP (90 aa)) folds into the Cache domain. The chain crosses the membrane as a helical span at residues 1117-1137 (ASFPPSLGVLVSLQLLLLLGL). Residues 1138–1154 (PPRPQPQVHSFAASRHL) lie on the Cytoplasmic side of the membrane.

This sequence belongs to the calcium channel subunit alpha-2/delta family. As to quaternary structure, dimer formed of alpha-2-2 and delta-2 chains; disulfide-linked. Voltage-dependent calcium channels are multisubunit complexes, consisting of alpha-1 (CACNA1), alpha-2 (CACNA2D), beta (CACNB) and delta (CACNA2D) subunits in a 1:1:1:1 ratio. Post-translationally, N-glycosylated. In terms of processing, may be proteolytically processed into subunits alpha-2-2 and delta-2 that are disulfide-linked. It is however unclear whether such cleavage really takes place in vivo and has a functional role. According to PubMed:11306709, it is processed, at least in vitro, while according to PubMed:17052222, it is only poorly processed in vivo. As to expression, predominantly expressed in brain in a restricted pattern. Also expressed at lower level in kidney and testis Not expressed in lung at any moment of development. In brain, it localizes to sections of P21 brain. Expressed at high level in the cerebellum, with moderate levels in medulla, pons, and striatum. Also expressed in cortex, hippocampus, habenula and nucleus reticularis thalami (nRT). Strongly expressed in cerebellar Purkinje cells.

It is found in the membrane. Its function is as follows. The alpha-2/delta subunit of voltage-dependent calcium channels regulates calcium current density and activation/inactivation kinetics of the calcium channel. Acts as a regulatory subunit for P/Q-type calcium channel (CACNA1A), N-type (CACNA1B), L-type (CACNA1C OR CACNA1D) and possibly T-type (CACNA1G). This chain is Voltage-dependent calcium channel subunit alpha-2/delta-2 (Cacna2d2), found in Mus musculus (Mouse).